Consider the following 136-residue polypeptide: LSADQISTVQASFDKVKGDPVGILYAVFKADPSIMAKFTQFAGKDLESIKGTAPFETHANRIVGFFSKIIGELPNIEADVNTFVASHKPRGVTHDQLNNFRAGFVSYMKAHTDFAGAEAAWGATLDTFFGMIFSKM.

A Globin domain is found at 1 to 136 (LSADQISTVQ…TFFGMIFSKM (136 aa)). Heme b is bound at residue His87.

It belongs to the globin family. In terms of assembly, monomer.

This Chironomus thummi piger (Midge) protein is Globin CTP-III.